A 730-amino-acid chain; its full sequence is LisH domain-containing protein ARMC9 (730 aa).

The region spanning 7 to 39 is the LisH domain; it reads HESELLGLVKEYLDFAEFEDTLKTFSKECKVKG. Residues 205-242 are a coiled coil; that stretch reads SNNKEMLQQLHQQLLEAERRAMAYLKRYNKMQADYHSL. Ser-583 bears the Phosphoserine mark. The disordered stretch occupies residues 675–730; it reads QNAQQARNGCPRPIPVAQPDDYKEGKRGVAGRATPSSCKSAECAEPVLSSGAQKPK.

Interacts with TOGARAM1, CCDC66, CEP104, CSPP1 and CEP290. Interacts with NDUFAF2.

Its subcellular location is the cytoplasm. It is found in the cytoskeleton. The protein resides in the cilium basal body. It localises to the cell projection. The protein localises to the cilium. Its subcellular location is the microtubule organizing center. It is found in the centrosome. The protein resides in the centriole. In terms of biological role, involved in ciliogenesis. It is required for appropriate acetylation and polyglutamylation of ciliary microtubules, and regulation of cilium length. Acts as a positive regulator of hedgehog (Hh)signaling. May participate in the trafficking and/or retention of GLI2 and GLI3 proteins at the ciliary tip. The polypeptide is LisH domain-containing protein ARMC9 (Armc9) (Rattus norvegicus (Rat)).